Here is a 380-residue protein sequence, read N- to C-terminus: Flagellar P-ring protein (380 aa).

The signal sequence occupies residues 1-35 (MRFFTQSPFPLRTLTRRLTAFVCVGLLLLPGFTLA).

It belongs to the FlgI family. As to quaternary structure, the basal body constitutes a major portion of the flagellar organelle and consists of four rings (L,P,S, and M) mounted on a central rod.

The protein resides in the periplasm. It is found in the bacterial flagellum basal body. Its function is as follows. Assembles around the rod to form the L-ring and probably protects the motor/basal body from shearing forces during rotation. The polypeptide is Flagellar P-ring protein (Gluconobacter oxydans (strain 621H) (Gluconobacter suboxydans)).